The chain runs to 734 residues: Photosystem I P700 chlorophyll a apoprotein A2 (734 aa).

Transmembrane regions (helical) follow at residues 46–69, 135–158, 175–199, 273–291, 330–353, 369–395, 417–439, and 517–535; these read IFAS…FHVA, LYTG…FHLQ, LNHH…HVAI, IAHH…GHMY, LHFQ…QHMY, AALY…IFFI, AIIS…LYVH, and FLVH…LILV. Positions 559 and 568 each coordinate [4Fe-4S] cluster. Helical transmembrane passes span 575 to 596 and 643 to 665; these read AFYL…YWHW and LSVW…MFLI. Chlorophyll a contacts are provided by H654, M662, and Y670. A phylloquinone-binding site is contributed by W671. A helical membrane pass occupies residues 707–727; that stretch reads LVGLAHFSVGYIFTYAAFLIA.

The protein belongs to the PsaA/PsaB family. As to quaternary structure, the PsaA/B heterodimer binds the P700 chlorophyll special pair and subsequent electron acceptors. PSI consists of a core antenna complex that captures photons, and an electron transfer chain that converts photonic excitation into a charge separation. The eukaryotic PSI reaction center is composed of at least 11 subunits. P700 is a chlorophyll a/chlorophyll a' dimer, A0 is one or more chlorophyll a, A1 is one or both phylloquinones and FX is a shared 4Fe-4S iron-sulfur center. serves as cofactor.

The protein localises to the plastid. Its subcellular location is the chloroplast thylakoid membrane. It carries out the reaction reduced [plastocyanin] + hnu + oxidized [2Fe-2S]-[ferredoxin] = oxidized [plastocyanin] + reduced [2Fe-2S]-[ferredoxin]. Its function is as follows. PsaA and PsaB bind P700, the primary electron donor of photosystem I (PSI), as well as the electron acceptors A0, A1 and FX. PSI is a plastocyanin-ferredoxin oxidoreductase, converting photonic excitation into a charge separation, which transfers an electron from the donor P700 chlorophyll pair to the spectroscopically characterized acceptors A0, A1, FX, FA and FB in turn. Oxidized P700 is reduced on the lumenal side of the thylakoid membrane by plastocyanin. This chain is Photosystem I P700 chlorophyll a apoprotein A2, found in Jasminum nudiflorum (Winter jasmine).